Here is a 308-residue protein sequence, read N- to C-terminus: Mycothiol acetyltransferase (308 aa).

2 N-acetyltransferase domains span residues 8–155 (RDVD…PRLR) and 160–308 (VQVR…RRAR). Glutamate 39 provides a ligand contact to 1D-myo-inositol 2-(L-cysteinylamino)-2-deoxy-alpha-D-glucopyranoside. 84 to 86 (LVV) serves as a coordination point for acetyl-CoA. 3 residues coordinate 1D-myo-inositol 2-(L-cysteinylamino)-2-deoxy-alpha-D-glucopyranoside: glutamate 187, lysine 226, and glutamate 240. Acetyl-CoA contacts are provided by residues 244 to 246 (LGI) and 251 to 257 (QGLGLGR). Tyrosine 278 is a 1D-myo-inositol 2-(L-cysteinylamino)-2-deoxy-alpha-D-glucopyranoside binding site.

This sequence belongs to the acetyltransferase family. MshD subfamily. In terms of assembly, monomer.

It catalyses the reaction 1D-myo-inositol 2-(L-cysteinylamino)-2-deoxy-alpha-D-glucopyranoside + acetyl-CoA = mycothiol + CoA + H(+). In terms of biological role, catalyzes the transfer of acetyl from acetyl-CoA to desacetylmycothiol (Cys-GlcN-Ins) to form mycothiol. The polypeptide is Mycothiol acetyltransferase (Geodermatophilus obscurus (strain ATCC 25078 / DSM 43160 / JCM 3152 / CCUG 61914 / KCC A-0152 / KCTC 9177 / NBRC 13315 / NRRL B-3577 / G-20)).